A 448-amino-acid polypeptide reads, in one-letter code: Chaperone SurA (448 aa).

The first 27 residues, 1–27 (MKKTLRFAAVAAGLVASLITVAPSASA), serve as a signal peptide directing secretion. 2 consecutive PpiC domains span residues 185-288 (QQDL…RLVD) and 301-399 (IVQT…QVLG). Residues 230-249 (LAKSQSEADDAKKGGDLGFK) are disordered.

The protein localises to the periplasm. The enzyme catalyses [protein]-peptidylproline (omega=180) = [protein]-peptidylproline (omega=0). Its function is as follows. Chaperone involved in the correct folding and assembly of outer membrane proteins. Recognizes specific patterns of aromatic residues and the orientation of their side chains, which are found more frequently in integral outer membrane proteins. May act in both early periplasmic and late outer membrane-associated steps of protein maturation. The sequence is that of Chaperone SurA from Burkholderia thailandensis (strain ATCC 700388 / DSM 13276 / CCUG 48851 / CIP 106301 / E264).